The chain runs to 268 residues: Lipase 1 (268 aa).

Residues 1–29 form the signal peptide; the sequence is MRRFRLVGFLSSLVLAAGAALTGAATAQA. The active-site Nucleophile is the serine 44. Intrachain disulfides connect cysteine 61-cysteine 86, cysteine 127-cysteine 135, and cysteine 185-cysteine 231. The active site involves histidine 250.

Belongs to the 'GDSL' lipolytic enzyme family. Monomer.

Its subcellular location is the secreted. It catalyses the reaction a triacylglycerol + H2O = a diacylglycerol + a fatty acid + H(+). Its activity is regulated as follows. Strongly inhibited by Ag(+). The cations Ca(2+), Mg(2+), Co(2+) and Cu(2+) do not significantly reduce the lipolytic activity of SCO1725. Is also inhibited by DTT in vitro, but not by EDTA or by the reagent masking SH-groups, p-hydroxymercuribenzoate (pHMB). Is resistant to PMSF inhibition, except in the presence of Ca(2+). Is also strongly inhibited by 3,4-dichloroisocoumarin (DCI), another inhibitor of serine hydrolases. Addition of tetrahydrofuran and 1,4-dioxane significantly increases (2- and 4- fold, respectively) hydrolytic activity of lipase towards p-nitrophenyl caprylate. Functionally, catalyzes the hydrolysis of fatty acid esters with a preference for mid-length acyl chain (C10-C16). Is able to hydrolyze the triacylglycerol triolein and mixed triacylglycerols from a wide range of natural oils; better activity is obtained with corn-, wheat germ- and olive oil that have higher content of linoleic and/or oleic acid (C18:2; C18:1, cis). Tween detergents are also substrates for this enzyme. Displays arylesterase activity towards p-nitrophenyl alkanoate esters and alpha- and beta-naphthyl esters. The polypeptide is Lipase 1 (Streptomyces coelicolor (strain ATCC BAA-471 / A3(2) / M145)).